The primary structure comprises 205 residues: Octanoyltransferase (205 aa).

One can recognise a BPL/LPL catalytic domain in the interval 30-205 (NSSDELVWLL…ILKKEFYKIF (176 aa)). Residues 68–75 (RGGKYTYH), 140–142 (AFG), and 153–155 (GIA) each bind substrate. C171 functions as the Acyl-thioester intermediate in the catalytic mechanism.

This sequence belongs to the LipB family.

It localises to the cytoplasm. It catalyses the reaction octanoyl-[ACP] + L-lysyl-[protein] = N(6)-octanoyl-L-lysyl-[protein] + holo-[ACP] + H(+). It functions in the pathway protein modification; protein lipoylation via endogenous pathway; protein N(6)-(lipoyl)lysine from octanoyl-[acyl-carrier-protein]: step 1/2. In terms of biological role, catalyzes the transfer of endogenously produced octanoic acid from octanoyl-acyl-carrier-protein onto the lipoyl domains of lipoate-dependent enzymes. Lipoyl-ACP can also act as a substrate although octanoyl-ACP is likely to be the physiological substrate. This Wolbachia sp. subsp. Brugia malayi (strain TRS) protein is Octanoyltransferase.